Here is a 606-residue protein sequence, read N- to C-terminus: Elongation factor 4 (606 aa).

The tr-type G domain maps to 10–192 (IRKKNFCIIA…AICKYVPSPR (183 aa)). GTP-binding positions include 22–27 (DHGKST) and 139–142 (NKID).

This sequence belongs to the TRAFAC class translation factor GTPase superfamily. Classic translation factor GTPase family. LepA subfamily.

It localises to the cell inner membrane. The enzyme catalyses GTP + H2O = GDP + phosphate + H(+). Its function is as follows. Required for accurate and efficient protein synthesis under certain stress conditions. May act as a fidelity factor of the translation reaction, by catalyzing a one-codon backward translocation of tRNAs on improperly translocated ribosomes. Back-translocation proceeds from a post-translocation (POST) complex to a pre-translocation (PRE) complex, thus giving elongation factor G a second chance to translocate the tRNAs correctly. Binds to ribosomes in a GTP-dependent manner. This is Elongation factor 4 from Borreliella burgdorferi (strain ATCC 35210 / DSM 4680 / CIP 102532 / B31) (Borrelia burgdorferi).